Reading from the N-terminus, the 201-residue chain is FMN-dependent NADH:quinone oxidoreductase (201 aa).

Residues serine 10, 16–18, and 96–99 each bind FMN; these read SQS and MYNF.

This sequence belongs to the azoreductase type 1 family. Homodimer. The cofactor is FMN.

The catalysed reaction is 2 a quinone + NADH + H(+) = 2 a 1,4-benzosemiquinone + NAD(+). The enzyme catalyses N,N-dimethyl-1,4-phenylenediamine + anthranilate + 2 NAD(+) = 2-(4-dimethylaminophenyl)diazenylbenzoate + 2 NADH + 2 H(+). Quinone reductase that provides resistance to thiol-specific stress caused by electrophilic quinones. Functionally, also exhibits azoreductase activity. Catalyzes the reductive cleavage of the azo bond in aromatic azo compounds to the corresponding amines. The polypeptide is FMN-dependent NADH:quinone oxidoreductase (Sodalis glossinidius (strain morsitans)).